The following is an 87-amino-acid chain: Small ribosomal subunit protein bS20 (87 aa).

The disordered stretch occupies residues 1–26 (MANIKSAKKRAVQSEKARKHNASRRS).

It belongs to the bacterial ribosomal protein bS20 family.

In terms of biological role, binds directly to 16S ribosomal RNA. In Salmonella gallinarum (strain 287/91 / NCTC 13346), this protein is Small ribosomal subunit protein bS20.